We begin with the raw amino-acid sequence, 360 residues long: Metalloendoproteinase 5-MMP (360 aa).

An N-terminal signal peptide occupies residues 1 to 20; that stretch reads MRTLLLTILIFFFTVNPISA. A propeptide spans 21 to 142 (activation peptide); that stretch reads KFYTNVSSIP…GGKILRTTEK (122 aa). N-linked (GlcNAc...) asparagine glycosylation is found at Asn25, Asn36, and Asn78. The Cysteine switch motif lies at 117 to 124; it reads PRCGNPDL. Cys119 is a binding site for Zn(2+). Residues Asn168 and Asn191 are each glycosylated (N-linked (GlcNAc...) asparagine). A Zn(2+)-binding site is contributed by His270. Glu271 is an active-site residue. Residues His274 and His280 each coordinate Zn(2+). Residues 312–336 form a disordered region; sequence LYGGNPNGDGGGSKPSRESQSTGGD. A lipid anchor (GPI-anchor amidated serine) is attached at Ser337. A propeptide spans 338 to 360 (removed in mature form); sequence VRRWRGWMISLSSIATCIFLISV.

The protein belongs to the peptidase M10A family. Matrix metalloproteinases (MMPs) subfamily. Zn(2+) serves as cofactor. As to expression, mostly expressed in leaves, roots and stems, and, to a lower extent, in flowers.

The protein localises to the cell membrane. Its activity is regulated as follows. Repressed by acetohydroxamic acid (AHA). Matrix metalloproteinases (MMPs) or matrixins may play a role in the degradation and remodeling of the extracellular matrix (ECM) during development or in response to stresses. Active on Mca-KESAbuNLFVLKDpaR-NH(2) (QF75) and, to some extent, on McaPLGLDpaAR-NH(2) (QF24), myelin basic protein (MBP) and beta-casein. In Arabidopsis thaliana (Mouse-ear cress), this protein is Metalloendoproteinase 5-MMP.